Reading from the N-terminus, the 441-residue chain is Serine carboxypeptidase-like 4 (441 aa).

A signal peptide spans 1-29 (MANNNVYSVLKSLLLLLHLVFLSKQHVDS). 3 cysteine pairs are disulfide-bonded: C88/C331, C252/C266, and C290/C297. N109 is a glycosylation site (N-linked (GlcNAc...) asparagine). Residue S184 is part of the active site. N350 is a glycosylation site (N-linked (GlcNAc...) asparagine). The active site involves D366. A glycan (N-linked (GlcNAc...) asparagine) is linked at N382. Residue H419 is part of the active site.

This sequence belongs to the peptidase S10 family. Ubiquitous.

The protein resides in the secreted. Its function is as follows. Probable carboxypeptidase. The protein is Serine carboxypeptidase-like 4 (SCPL4) of Arabidopsis thaliana (Mouse-ear cress).